We begin with the raw amino-acid sequence, 396 residues long: Formate-dependent phosphoribosylglycinamide formyltransferase (396 aa).

N(1)-(5-phospho-beta-D-ribosyl)glycinamide is bound by residues 24-25 (EL) and glutamate 84. ATP contacts are provided by residues arginine 116, lysine 157, 162 to 167 (SSGKGQ), 197 to 200 (EGFV), and glutamate 205. An ATP-grasp domain is found at 121-310 (RLAAETLGIK…EFALHVRAIL (190 aa)). Mg(2+)-binding residues include glutamate 269 and glutamate 281. Residues aspartate 288, lysine 359, and 366 to 367 (RR) contribute to the N(1)-(5-phospho-beta-D-ribosyl)glycinamide site.

This sequence belongs to the PurK/PurT family. As to quaternary structure, homodimer.

The enzyme catalyses N(1)-(5-phospho-beta-D-ribosyl)glycinamide + formate + ATP = N(2)-formyl-N(1)-(5-phospho-beta-D-ribosyl)glycinamide + ADP + phosphate + H(+). Its pathway is purine metabolism; IMP biosynthesis via de novo pathway; N(2)-formyl-N(1)-(5-phospho-D-ribosyl)glycinamide from N(1)-(5-phospho-D-ribosyl)glycinamide (formate route): step 1/1. Involved in the de novo purine biosynthesis. Catalyzes the transfer of formate to 5-phospho-ribosyl-glycinamide (GAR), producing 5-phospho-ribosyl-N-formylglycinamide (FGAR). Formate is provided by PurU via hydrolysis of 10-formyl-tetrahydrofolate. This is Formate-dependent phosphoribosylglycinamide formyltransferase from Psychromonas ingrahamii (strain DSM 17664 / CCUG 51855 / 37).